A 623-amino-acid chain; its full sequence is EIN3-binding F-box protein 2 (623 aa).

The F-box domain maps to 52 to 106 (QTSIDVLPEECLFEILRRLPSGQERSACACVSKHWLNLLSSISRSEVNESSVQDV). 18 LRR repeats span residues 119-147 (GKKA…QIRG), 151-176 (ESKV…SLWN), 177-202 (LPAV…DLSR), 203-228 (CPGI…TIDS), 229-254 (CSGV…SIRS), 255-281 (CPRI…KLQM), 307-334 (LQGV…SVMS), 335-360 (CRGM…SLNK), 361-386 (CLLV…KLEE), 387-413 (CHRI…SLAN), 414-441 (CLGI…SIRC), 442-467 (CPGF…ELCG), 468-494 (LNGV…NLSE), 495-521 (CINV…NLDG), 522-547 (CKNI…DISN), 548-574 (TLVS…SIGG), 575-600 (CSSI…NIQR), and 601-623 (CGRI…DILY).

In terms of assembly, part of a SCF (SKP1-cullin-F-box) protein ligase complex. Interacts with CUL1, SKP1A/ASK1, SKP1B/ASK2, EIN3, and EIL1. In terms of tissue distribution, ubiquitous.

The protein resides in the nucleus. It participates in protein modification; protein ubiquitination. In terms of biological role, component of SCF(EBF1) E3 ubiquitin ligase complexes, which may mediate the ubiquitination and subsequent proteasomal degradation of target proteins (probably including EIN3 and EIL1). Regulator of the ethylene signaling cascade by modulating the stability of EIN3 and EIL1 proteins. The polypeptide is EIN3-binding F-box protein 2 (EBF2) (Arabidopsis thaliana (Mouse-ear cress)).